A 231-amino-acid chain; its full sequence is MKRAVVVFSGGQDSTTCLIQALEQYDEVHCVTFDYGQRHRAEIDVAQQLSASLGVRAHKVLDVTMLNELAASSLTRDNIPVPAYDPSASGLPSTFVPGRNIVFFTFASIYAFQIEAEAIITGACETDFSGYPDCRDEFVKALNRAVNLGMARELRIETPLMWLNKAETWALADYWQQLPLIRHQTLTCYNGIIGDGCGDCAACHLRARGLDQYQQNPTSVMLEMERKTGLA.

Residue 8–18 (FSGGQDSTTCL) coordinates ATP. 4 residues coordinate Zn(2+): C188, C197, C200, and C203.

The protein belongs to the QueC family. Zn(2+) is required as a cofactor.

It carries out the reaction 7-carboxy-7-deazaguanine + NH4(+) + ATP = 7-cyano-7-deazaguanine + ADP + phosphate + H2O + H(+). It functions in the pathway purine metabolism; 7-cyano-7-deazaguanine biosynthesis. Catalyzes the ATP-dependent conversion of 7-carboxy-7-deazaguanine (CDG) to 7-cyano-7-deazaguanine (preQ(0)). This chain is 7-cyano-7-deazaguanine synthase, found in Erwinia tasmaniensis (strain DSM 17950 / CFBP 7177 / CIP 109463 / NCPPB 4357 / Et1/99).